The following is a 213-amino-acid chain: 3-isopropylmalate dehydratase small subunit (213 aa).

This sequence belongs to the LeuD family. LeuD type 1 subfamily. In terms of assembly, heterodimer of LeuC and LeuD.

It catalyses the reaction (2R,3S)-3-isopropylmalate = (2S)-2-isopropylmalate. It participates in amino-acid biosynthesis; L-leucine biosynthesis; L-leucine from 3-methyl-2-oxobutanoate: step 2/4. In terms of biological role, catalyzes the isomerization between 2-isopropylmalate and 3-isopropylmalate, via the formation of 2-isopropylmaleate. This Pseudomonas savastanoi pv. phaseolicola (strain 1448A / Race 6) (Pseudomonas syringae pv. phaseolicola (strain 1448A / Race 6)) protein is 3-isopropylmalate dehydratase small subunit.